We begin with the raw amino-acid sequence, 822 residues long: A disintegrin and metallopeptidase domain 3 (822 aa).

Residues 1–16 (MLPLFLVLSYLGQVIA) form the signal peptide. Residues 187 to 384 (RILRIKIIMD…PELDCLRNTS (198 aa)) enclose the Peptidase M12B domain. Cystine bridges form between Cys296-Cys379, Cys338-Cys363, Cys340-Cys345, Cys456-Cys476, Cys623-Cys635, Cys629-Cys641, and Cys643-Cys652. The region spanning 395-484 (GSYCGNHLLE…GCAPDTKAAD (90 aa)) is the Disintegrin domain. Residues 619–653 (GTRECEADDKCQGHGICNNLNNCQCESGFAPPECD) form the EGF-like domain. Residues 689 to 709 (VLLISFYILLPFLVVLAFMAV) form a helical membrane-spanning segment.

As to quaternary structure, interacts with LY6K. Interacts with TEX101. In terms of processing, initially synthesized as a 110-kDa precursor in round spermatids, and the precursor is then processed into a 42-kDa mature protein during the sperm transport into and/or once in the epididymis. As to expression, expressed in sperm (at protein level).

The protein localises to the cell membrane. Its function is as follows. Involved in fertilization by controlling sperm migration into the oviduct. Promotes the binding of sperm to the oocyte zona pellucida. In Mus musculus (Mouse), this protein is A disintegrin and metallopeptidase domain 3.